The chain runs to 379 residues: DnaJ homolog subfamily B member 14 (379 aa).

Topologically, residues 1–244 (MEGNRDEAEK…GHEREEERAD (244 aa)) are cytoplasmic. The disordered stretch occupies residues 56–90 (TAGSSTHCRKPPGSSDQSKPSCGKDGTSGAGEGGK). Positions 108–172 (NYYEVLGVTK…EKRKQYDLTG (65 aa)) constitute a J domain. The helical transmembrane segment at 245–265 (GGFSVFIQLMPIIVLILVSLL) threads the bilayer. Topologically, residues 266–379 (SQLMVSNPPY…ERLTSLYKGG (114 aa)) are lumenal.

Belongs to the DnaJ family. DNAJB12/DNAJB14 subfamily. Interacts (via J domain) with HSPA8/Hsc70. Forms a multiprotein complex, at least composed of DNAJB12, DNAJB14, HSPA8/Hsc70 and SGTA; interaction with DNAJB14 and HSPA8/Hsc70 is direct.

It is found in the endoplasmic reticulum membrane. The protein resides in the nucleus membrane. Acts as a co-chaperone with HSPA8/Hsc70; required to promote protein folding and trafficking, prevent aggregation of client proteins, and promote unfolded proteins to endoplasmic reticulum-associated degradation (ERAD) pathway. Acts by determining HSPA8/Hsc70's ATPase and polypeptide-binding activities. Can also act independently of HSPA8/Hsc70: together with DNAJB12, acts as a chaperone that promotes maturation of potassium channels KCND2 and KCNH2 by stabilizing nascent channel subunits and assembling them into tetramers. While stabilization of nascent channel proteins is dependent on HSPA8/Hsc70, the process of oligomerization of channel subunits is independent of HSPA8/Hsc70. When overexpressed, forms membranous structures together with DNAJB12 and HSPA8/Hsc70 within the nucleus; the role of these structures, named DJANGOs, is still unclear. The chain is DnaJ homolog subfamily B member 14 from Mus musculus (Mouse).